A 206-amino-acid chain; its full sequence is Small ribosomal subunit protein uS4c (206 aa).

An S4 RNA-binding domain is found at 93-161 (MRLDNIVYRL…IEKNIELLDK (69 aa)).

The protein belongs to the universal ribosomal protein uS4 family. In terms of assembly, part of the 30S ribosomal subunit. Contacts protein S5. The interaction surface between S4 and S5 is involved in control of translational fidelity.

The protein resides in the plastid. In terms of biological role, one of the primary rRNA binding proteins, it binds directly to 16S rRNA where it nucleates assembly of the body of the 30S subunit. Its function is as follows. With S5 and S12 plays an important role in translational accuracy. This Euglena longa (Euglenophycean alga) protein is Small ribosomal subunit protein uS4c (rps4).